The primary structure comprises 223 residues: Small ribosomal subunit protein uS3 (223 aa).

The 69-residue stretch at 39-107 (VRSYLAKKLS…PVHINIQEIR (69 aa)) folds into the KH type-2 domain.

Belongs to the universal ribosomal protein uS3 family. As to quaternary structure, part of the 30S ribosomal subunit. Forms a tight complex with proteins S10 and S14.

Binds the lower part of the 30S subunit head. Binds mRNA in the 70S ribosome, positioning it for translation. This Nitrosococcus oceani (strain ATCC 19707 / BCRC 17464 / JCM 30415 / NCIMB 11848 / C-107) protein is Small ribosomal subunit protein uS3.